Here is a 688-residue protein sequence, read N- to C-terminus: Glycine--tRNA ligase beta subunit (688 aa).

It belongs to the class-II aminoacyl-tRNA synthetase family. In terms of assembly, tetramer of two alpha and two beta subunits.

It is found in the cytoplasm. The enzyme catalyses tRNA(Gly) + glycine + ATP = glycyl-tRNA(Gly) + AMP + diphosphate. This chain is Glycine--tRNA ligase beta subunit, found in Shewanella sp. (strain MR-4).